A 130-amino-acid chain; its full sequence is Small ribosomal subunit protein uS8 (130 aa).

This sequence belongs to the universal ribosomal protein uS8 family. Part of the 30S ribosomal subunit. Contacts proteins S5 and S12.

One of the primary rRNA binding proteins, it binds directly to 16S rRNA central domain where it helps coordinate assembly of the platform of the 30S subunit. In Cereibacter sphaeroides (strain KD131 / KCTC 12085) (Rhodobacter sphaeroides), this protein is Small ribosomal subunit protein uS8.